Reading from the N-terminus, the 1392-residue chain is Leucine-rich PPR motif-containing protein, mitochondrial (1392 aa).

A mitochondrion-targeting transit peptide spans 1–59; that stretch reads MAALLRPARWLLGAAAAPRLPLSLRLPAGVPGRLSSVVRVAAVGSRPAAGERLSQARLY. PPR repeat units lie at residues 125-159, 160-194, 195-229, 230-264, 265-299, 300-334, 402-436, 437-471, 677-708, 709-745, 746-783, 784-820, 821-856, and 953-987; these read LLRSCGSLLPELSLAERTEFAHKIWDKLQQLGVVY, DVSHYNALLKVYLQNEYKFSPTDFLAKMEGANIQP, NRVTYQRLIAAYCNVGDIEGASKILGFMKTKDLPI, TEAVFSALVTGHARAGDMENAENILTVMKQAGIEP, GPDTYLALLNAHAERGDIGQVRQILEKVEKSDHYF, MDRDFLQVIFSFSKAGYPQYVSEILEKITYERRSI, HSSSLQFTLHCALQANRTALAKAVMEALREEGFPI, RPHYFWPLLAGHQKTKNVQGIIDILKIMNKVGVDP, VGSALKQLLLLLCSEENMQKALEVKAKYESDM, VIGGYAALINLCCRHDNAEDAWNLKQEVDRLDASAIL, DTAKYVALVKVLGKHSRLQDAINILKEMKEKDVVIKDA, TVLSFFHILNGAALRGEIETVKQLHEAIVTLGLAKPS, SNISFPLVTVHLEKGDLPAALEASIACHKKYKVLPR, and RDQMYYNLLKLYKISSDWQRADAAWTKMQEENIIP. N6-acetyllysine occurs at positions 151, 186, and 225. The residue at position 291 (lysine 291) is an N6-acetyllysine. At lysine 462 the chain carries N6-acetyllysine. Lysine 749 carries the post-translational modification N6-acetyllysine. Residues 931-1050 form an RNA-binding region; it reads ASNQVEALEK…NCKLKKSKDA (120 aa). 3 positions are modified to phosphoserine: serine 1025, serine 1026, and serine 1028. PPR repeat units lie at residues 1030 to 1064, 1065 to 1101, 1102 to 1136, 1137 to 1175, 1176 to 1210, and 1315 to 1349; these read GEDVTEKTLLSNCKLKKSKDAYNIFLKAEKQNVVF, SSETYSTLIGLLLSKDDFTQAMHVKDFAETHIKGFTL, NDAANSLLIIRQVRRDYLKGALATLRAALDLKQVP, SQIAVTRLIQALALKGDVESIEAIQRMVAGLDTIGLSKM, VFINNIALAQMKNNKLDAAIENIEHLLASENQAIE, and NDKVYSCSMKSYALDKDVASAKALYEYLTAKNLKL. At serine 1137 the chain carries Phosphoserine.

In terms of assembly, component of mRNP complexes associated with HNRPA1. Component of the complex, at least composed of LRPPRC, BECN1 and BCL2; the interactions prevent BECN1 from forming an autophagy-inducing complex with PIK3C3. Interacts with CECR2, HEBP2, MAP1S and UXT. Interacts with PPARGC1A. Interacts with FOXO1. Interacts (via N-terminus) with EIF4E; the interaction promotes association of EIF4E with 4ESE-containing mRNAs. Interacts with exportin XPO1/CRM1; interacts both alone and in complex with EIF4E and 4ESE-containing mRNAs to form an EIF4E-dependent mRNA export complex. Interacts with importin IPO8; the interaction occurs when LRPPRC is in its RNA-free form and returns LRPPRC to the nucleus for further export rounds. Interacts with BECN1. As to expression, strongly expressed in heart, liver and kidney. Weakly expressed in brain, skeletal muscle and testes.

It localises to the mitochondrion. The protein localises to the nucleus. Its subcellular location is the nucleoplasm. The protein resides in the nucleus inner membrane. It is found in the nucleus outer membrane. Functionally, may play a role in RNA metabolism in both nuclei and mitochondria. In the nucleus binds to HNRPA1-associated poly(A) mRNAs and is part of nmRNP complexes at late stages of mRNA maturation which are possibly associated with nuclear mRNA export. Positively modulates nuclear export of mRNAs containing the EIF4E sensitivity element (4ESE) by binding simultaneously to both EIF4E and the 4ESE and acting as a platform for assembly for the RNA export complex. Also binds to exportin XPO1/CRM1 to engage the nuclear pore and traffic the bound mRNAs to the cytoplasm. May bind mature mRNA in the nucleus outer membrane. In mitochondria binds to poly(A) mRNA. Plays a role in translation or stability of mitochondrially encoded cytochrome c oxidase (COX) subunits. May be involved in transcription regulation. Cooperates with PPARGC1A to regulate certain mitochondrially encoded genes and gluconeogenic genes and may regulate docking of PPARGC1A to transcription factors. Seems to be involved in the transcription regulation of the multidrug-related genes MDR1 and MVP. Part of a nuclear factor that binds to the invMED1 element of MDR1 and MVP gene promoters. Binds single-stranded DNA. Required for maintaining mitochondrial potential. Suppresses the initiation of basal levels of autophagy and mitophagy by sustaining BCL2 levels. This chain is Leucine-rich PPR motif-containing protein, mitochondrial (Lrpprc), found in Mus musculus (Mouse).